A 350-amino-acid polypeptide reads, in one-letter code: MNYQNDDLRIKEIKELLPPVALLEKFPATENAANTVAHARKAIHKILKGNDDRLLVVIGPCSIHDPVAAKEYATRLLALREELKDELEIVMRVYFEKPRTTVGWKGLINDPHMDNSFQINDGLRIARKLLLDINDSGLPAAGEFLDMITPQYLADLMSWGAIGARTTESQVHRELASGLSCPVGFKNGTDGTIKVAIDAINAAGAPHCFLSVTKWGHSAIVNTSGNGDCHIILRGGKEPNYSAKHVAEVKEGLNKAGLPAQVMIDFSHANSSKQFKKQMDVCADVCQQIAGGEKAIIGVMVESHLVEGNQSLESGEPLAYGKSITDACIGWEDTDALLRQLANAVKARRG.

An N6-acetyllysine modification is found at lysine 244.

Belongs to the class-I DAHP synthase family. As to quaternary structure, homotetramer.

The enzyme catalyses D-erythrose 4-phosphate + phosphoenolpyruvate + H2O = 7-phospho-2-dehydro-3-deoxy-D-arabino-heptonate + phosphate. It functions in the pathway metabolic intermediate biosynthesis; chorismate biosynthesis; chorismate from D-erythrose 4-phosphate and phosphoenolpyruvate: step 1/7. Its function is as follows. Stereospecific condensation of phosphoenolpyruvate (PEP) and D-erythrose-4-phosphate (E4P) giving rise to 3-deoxy-D-arabino-heptulosonate-7-phosphate (DAHP). This Escherichia coli O157:H7 protein is Phospho-2-dehydro-3-deoxyheptonate aldolase, Phe-sensitive (aroG).